The sequence spans 302 residues: tRNA dimethylallyltransferase (302 aa).

9-16 is a binding site for ATP; sequence GPTAAGKS. 11 to 16 lines the substrate pocket; that stretch reads TAAGKS. The interaction with substrate tRNA stretch occupies residues 34-37; that stretch reads DSRQ.

Belongs to the IPP transferase family. As to quaternary structure, monomer. Mg(2+) is required as a cofactor.

The catalysed reaction is adenosine(37) in tRNA + dimethylallyl diphosphate = N(6)-dimethylallyladenosine(37) in tRNA + diphosphate. Its function is as follows. Catalyzes the transfer of a dimethylallyl group onto the adenine at position 37 in tRNAs that read codons beginning with uridine, leading to the formation of N6-(dimethylallyl)adenosine (i(6)A). This chain is tRNA dimethylallyltransferase, found in Gloeobacter violaceus (strain ATCC 29082 / PCC 7421).